We begin with the raw amino-acid sequence, 290 residues long: Arylamine N-acetyltransferase 2 (290 aa).

Cys-68 (acyl-thioester intermediate) is an active-site residue. 2 residues coordinate CoA: Ser-103 and Gly-104. Ile-106–His-107 is a substrate binding site. Residues His-107 and Asp-122 contribute to the active site. Residue Tyr-208 coordinates CoA.

It belongs to the arylamine N-acetyltransferase family.

The protein localises to the cytoplasm. The enzyme catalyses an arylamine + acetyl-CoA = an N-acetylarylamine + CoA. It catalyses the reaction an N-hydroxyarylamine + acetyl-CoA = an N-acetoxyarylamine + CoA. Its function is as follows. Catalyzes the N- or O-acetylation of various arylamine and heterocyclic amine substrates, and participates in the detoxification of a plethora of hydrazine and arylamine drugs. The chain is Arylamine N-acetyltransferase 2 (NAT2) from Mesocricetus auratus (Golden hamster).